A 351-amino-acid polypeptide reads, in one-letter code: Cell shape-determining protein MreB (351 aa).

ATP contacts are provided by residues 20 to 22 (TAN), 169 to 171 (GGT), 217 to 220 (ERIK), and 299 to 302 (GGAL).

It belongs to the FtsA/MreB family. In terms of assembly, forms polymers.

Its subcellular location is the cytoplasm. Forms membrane-associated dynamic filaments that are essential for cell shape determination. Acts by regulating cell wall synthesis and cell elongation, and thus cell shape. A feedback loop between cell geometry and MreB localization may maintain elongated cell shape by targeting cell wall growth to regions of negative cell wall curvature. This Haemophilus influenzae (strain ATCC 51907 / DSM 11121 / KW20 / Rd) protein is Cell shape-determining protein MreB.